The sequence spans 166 residues: Ureidoglycolate lyase (166 aa).

It belongs to the ureidoglycolate lyase family. Homodimer. It depends on Ni(2+) as a cofactor.

The enzyme catalyses (S)-ureidoglycolate = urea + glyoxylate. The protein operates within nitrogen metabolism; (S)-allantoin degradation. In terms of biological role, catalyzes the catabolism of the allantoin degradation intermediate (S)-ureidoglycolate, generating urea and glyoxylate. Involved in the utilization of allantoin as nitrogen source. This Azotobacter vinelandii (strain DJ / ATCC BAA-1303) protein is Ureidoglycolate lyase.